The chain runs to 1941 residues: Xin actin-binding repeat-containing protein 1 (1941 aa).

Residues 1–41 (MAEPQKSSKVAIKKMEDDLPPPPIPDSIQVIAPASQDPNPL) are disordered. 27 Xin repeats span residues 108–123 (GEVQSMRWIFENWALD), 143–158 (GDVKSTSLRFENQSVN), 176–191 (GDVHTARWLFETQPLD), 215–230 (GDVKGAKELFEAQSLD), 255–270 (GDVKKTIRLFQTEPLC), 293–308 (NAVRTARWLFETQPLD), 331–346 (PDVSGARWIFETQPLD), 368–383 (ADVTKQRLLFGTQALD), 402–417 (GDVKSTLWLFETQPME), 439–454 (GDVKQRKHVFETCPLG), 475–490 (GDVKSFKTLFETLPLD), 510–525 (GNVKANQILFETTPLY), 548–563 (GDVKKYKWMFETRPLD), 586–601 (GDVRTAKWLFETQPMD), 624–639 (GDVKTCRWLFETQPMH), 658–673 (ADVKSYTWMFETQPLD), 697–712 (VDVKTVRHLFETEPLG), 736–751 (GEVSRVKEFFEAKPLD), 769–784 (GSVHKFTWLFENYPMD), 805–820 (GDVGGKRFIFETYSLD), 842–857 (ANVKSCTMLFESQPLY), 880–895 (GDVKGARWLFETKPLD), 917–932 (GDVQAARWRFETEPLD), 951–966 (GDVQSNKQLFESQQVG), 982–997 (GDVRTSTWLFENQPVD), 1020–1035 (GDVKRCTWLFETQPMD), and 1055–1070 (ADVKSTTWLFESTPLD). The span at 1514–1565 (ASKQETKTLQSTIHQQESASTMRENTSTAIRTSTTRVQEASRTHTSVSQKSI) shows a compositional bias: polar residues. 3 disordered regions span residues 1514–1568 (ASKQ…IASH), 1715–1856 (ASGS…PPPA), and 1914–1941 (YKARKGGQGKFELDRAKPSKPVKNGEVG). Over residues 1820–1833 (SASTNNSTNRSTKS) the composition is skewed to low complexity. Positions 1834-1843 (VPPPVPPKPP) are enriched in pro residues.

This sequence belongs to the Xin family. Expressed at intercalated disks in the heart (at protein level).

Its subcellular location is the cell junction. The protein resides in the adherens junction. It localises to the desmosome. Involved in cardiac morphogenesis, including heart midline formation, cardiac tubule looping, myocardial formation and maintenance of heart beat speed and rhythm. May protect actin filaments from depolymerization. May play a role in development of normal skeletal muscle morphology, muscle fiber type composition and regulation of muscle satellite cell activation and survival. In Gallus gallus (Chicken), this protein is Xin actin-binding repeat-containing protein 1.